The chain runs to 503 residues: ATP synthase subunit beta (503 aa).

157–164 serves as a coordination point for ATP; it reads GGAGVGKT.

It belongs to the ATPase alpha/beta chains family. In terms of assembly, F-type ATPases have 2 components, CF(1) - the catalytic core - and CF(0) - the membrane proton channel. CF(1) has five subunits: alpha(3), beta(3), gamma(1), delta(1), epsilon(1). CF(0) has three main subunits: a(1), b(2) and c(9-12). The alpha and beta chains form an alternating ring which encloses part of the gamma chain. CF(1) is attached to CF(0) by a central stalk formed by the gamma and epsilon chains, while a peripheral stalk is formed by the delta and b chains.

The protein localises to the cell inner membrane. It catalyses the reaction ATP + H2O + 4 H(+)(in) = ADP + phosphate + 5 H(+)(out). Its function is as follows. Produces ATP from ADP in the presence of a proton gradient across the membrane. The catalytic sites are hosted primarily by the beta subunits. The sequence is that of ATP synthase subunit beta from Flavobacterium johnsoniae (strain ATCC 17061 / DSM 2064 / JCM 8514 / BCRC 14874 / CCUG 350202 / NBRC 14942 / NCIMB 11054 / UW101) (Cytophaga johnsonae).